The sequence spans 335 residues: Nucleoid-associated protein KPK_1538 (335 aa).

Belongs to the YejK family.

The protein localises to the cytoplasm. Its subcellular location is the nucleoid. This is Nucleoid-associated protein KPK_1538 from Klebsiella pneumoniae (strain 342).